Reading from the N-terminus, the 345-residue chain is MSIDLISMILLWFGLYYIVSLSLNMEFGYAGIPNFGKALSVLVGAIAVGGILDRLLMLYFGIGGDFITGTTYATSAINNLIASNPIVGIGILILAIILASILGFVVGAIFILPSAKLKEDYLGITLLAISEAVLLICTYNLNIIGGYYGISTPDILAFVSGEYRGWVFAWIVLFIAFLVYLFFERLLNTPFGRVLRAMRENENTVKAFGRDIMKLRIKTMAIGSAIGAIAGVLYSLYTVNIIANAFTRVDWTFFPFLMVLLGGKGNNKGVALGVLCYVIVKVLLDIYKYNIKYALGIPFEPVWLSYMLFGVLMLLILYYKPSGLIPEKPIITPPMKKKIMEISGK.

8 consecutive transmembrane segments (helical) span residues 3–23, 42–62, 91–111, 124–144, 163–183, 222–242, 269–289, and 297–317; these read IDLISMILLWFGLYYIVSLSL, LVGAIAVGGILDRLLMLYFGI, ILILAIILASILGFVVGAIFI, ITLLAISEAVLLICTYNLNII, YRGWVFAWIVLFIAFLVYLFF, IGSAIGAIAGVLYSLYTVNII, GVALGVLCYVIVKVLLDIYKY, and IPFEPVWLSYMLFGVLMLLIL.

This sequence belongs to the binding-protein-dependent transport system permease family. LivHM subfamily.

Its subcellular location is the cell membrane. Its function is as follows. Part of the binding-protein-dependent transport system for branched-chain amino acids. Probably responsible for the translocation of the substrates across the membrane. This is Probable branched-chain amino acid transport permease protein LivM (livM) from Methanocaldococcus jannaschii (strain ATCC 43067 / DSM 2661 / JAL-1 / JCM 10045 / NBRC 100440) (Methanococcus jannaschii).